Here is a 328-residue protein sequence, read N- to C-terminus: PhoH-like protein (328 aa).

135 to 142 (GPAGTGKT) provides a ligand contact to ATP.

The protein belongs to the PhoH family.

Its subcellular location is the cytoplasm. This chain is PhoH-like protein, found in Synechocystis sp. (strain ATCC 27184 / PCC 6803 / Kazusa).